The following is a 270-amino-acid chain: D-aminoacyl-tRNA deacylase (270 aa).

The protein belongs to the DtdA deacylase family. In terms of assembly, monomer. Requires Zn(2+) as cofactor.

The enzyme catalyses a D-aminoacyl-tRNA + H2O = a tRNA + a D-alpha-amino acid + H(+). It catalyses the reaction glycyl-tRNA(Ala) + H2O = tRNA(Ala) + glycine + H(+). Functionally, D-aminoacyl-tRNA deacylase with broad substrate specificity. By recycling D-aminoacyl-tRNA to D-amino acids and free tRNA molecules, this enzyme counteracts the toxicity associated with the formation of D-aminoacyl-tRNA entities in vivo. The polypeptide is D-aminoacyl-tRNA deacylase (Pyrococcus furiosus (strain ATCC 43587 / DSM 3638 / JCM 8422 / Vc1)).